A 798-amino-acid chain; its full sequence is Nucleolin homolog 1 (798 aa).

The segment at 1-548 is disordered; that stretch reads MGFDSPRGRG…IISEEERRRQ (548 aa). Residues 8–34 are compositionally biased toward gly residues; the sequence is GRGGGGFRGGRGGGSGFTPRGGGGGFR. 3 stretches are compositionally biased toward basic and acidic residues: residues 59-75, 88-98, and 106-116; these read GGDR…DREG, GGDRGGFRGGD, and GGDRGNFRGGD. Gly residues-rich tracts occupy residues 150–164 and 171–184; these read RGGG…GRGG and GGRG…GGSR. 4 stretches are compositionally biased toward acidic residues: residues 196–205, 226–242, 258–278, and 287–317; these read SDGDDDEEEE, DDSG…DEEP, EDSD…DDDA, and VEED…EETE. Polar residues predominate over residues 328–350; that stretch reads SLKSVDSTKGKQVNLSKVATPTT. 2 stretches are compositionally biased toward acidic residues: residues 378-404 and 424-450; these read DDDS…EEED and IEED…EEDT. Low complexity predominate over residues 467-476; it reads AANRAAASAA. The segment covering 478 to 504 has biased composition (acidic residues); the sequence is DSDEDEDEEDEEDVEEEDEEEEEEEDI. Positions 532–548 are enriched in basic and acidic residues; sequence VKSDGKSIISEEERRRQ. The region spanning 638 to 713 is the RRM domain; that stretch reads LQLFINALPG…HLVDVFYARH (76 aa). Residues 736–798 form a disordered region; that stretch reads PKVAADSSGD…FKKTGFKGKK (63 aa). The segment covering 743 to 762 has biased composition (acidic residues); that stretch reads SGDDSEEVASSDEGIQEVEE. Positions 783–798 are enriched in basic residues; sequence QQKKPQFKKTGFKGKK.

As to quaternary structure, identified in an mRNP granule complex containing untranslated mRNAs.

Its subcellular location is the nucleus. It is found in the nucleolus. Nucleolin is the major nucleolar protein of growing eukaryotic cells. It is found associated with intranucleolar chromatin and pre-ribosomal particles. It induces chromatin decondensation by binding to histone H1. It is thought to play a role in pre-rRNA transcription and ribosome assembly. May play a role in the process of transcriptional elongation. Involved in phase separation into sub-nucleolar condensates. This is Nucleolin homolog 1 from Caenorhabditis elegans.